The primary structure comprises 83 residues: Putative potassium channel toxin Ts20 (83 aa).

The first 18 residues, 1–18 (MKLDIVLIMFVTFSTTLA), serve as a signal peptide directing secretion.

Post-translationally, contains 3 disulfide bonds. Expressed by the venom gland.

The protein resides in the secreted. Reversibly inhibits potassium channels. This chain is Putative potassium channel toxin Ts20, found in Tityus serrulatus (Brazilian scorpion).